Consider the following 73-residue polypeptide: Kappa-scoloptoxin(03)-Ssm1b (73 aa).

A signal peptide spans 1–23; that stretch reads MKPSMAILLVIALIIFSLDKSYS. Disulfide bonds link Cys-32/Cys-58, Cys-41/Cys-57, and Cys-44/Cys-67.

Contains 3 disulfide bonds. Expressed by the venom gland.

The protein resides in the secreted. In terms of biological role, inhibits voltage-gated potassium channels. The protein is Kappa-scoloptoxin(03)-Ssm1b of Scolopendra mutilans (Chinese red-headed centipede).